Consider the following 311-residue polypeptide: Putative dihydroorotate dehydrogenase A (fumarate) (311 aa).

Substrate is bound by residues lysine 45, asparagine 69–leucine 73, and asparagine 128. Position 45-46 (lysine 45–threonine 46) interacts with FMN. Position 128 (asparagine 128) interacts with FMN. Residue cysteine 131 is the Nucleophile of the active site. 2 residues coordinate FMN: lysine 165 and valine 193. Position 194-195 (asparagine 194–serine 195) interacts with substrate. FMN-binding positions include glycine 220, glycine 248–glycine 249, and glycine 270–threonine 271.

The protein belongs to the dihydroorotate dehydrogenase family. Type 1 subfamily. Homodimer. The cofactor is FMN.

The protein resides in the cytoplasm. The catalysed reaction is (S)-dihydroorotate + fumarate = orotate + succinate. The protein operates within pyrimidine metabolism; UMP biosynthesis via de novo pathway. Functionally, catalyzes the conversion of dihydroorotate to orotate with fumarate as the electron acceptor. This is Putative dihydroorotate dehydrogenase A (fumarate) (pyrD) from Streptococcus pyogenes serotype M18 (strain MGAS8232).